A 209-amino-acid chain; its full sequence is Na(+)-translocating NADH-quinone reductase subunit D (209 aa).

5 helical membrane-spanning segments follow: residues 42–62 (LVMT…ISLI), 72–92 (IIVQ…ILQA), 103–123 (VFVG…AYAM), 131–151 (FMDG…VGFL), and 178–198 (NGLF…IWGL).

This sequence belongs to the NqrDE/RnfAE family. As to quaternary structure, composed of six subunits; NqrA, NqrB, NqrC, NqrD, NqrE and NqrF.

The protein localises to the cell inner membrane. The catalysed reaction is a ubiquinone + n Na(+)(in) + NADH + H(+) = a ubiquinol + n Na(+)(out) + NAD(+). In terms of biological role, NQR complex catalyzes the reduction of ubiquinone-1 to ubiquinol by two successive reactions, coupled with the transport of Na(+) ions from the cytoplasm to the periplasm. NqrA to NqrE are probably involved in the second step, the conversion of ubisemiquinone to ubiquinol. The protein is Na(+)-translocating NADH-quinone reductase subunit D of Photorhabdus laumondii subsp. laumondii (strain DSM 15139 / CIP 105565 / TT01) (Photorhabdus luminescens subsp. laumondii).